A 346-amino-acid polypeptide reads, in one-letter code: Ornithine carbamoyltransferase, catabolic (346 aa).

Residues 58 to 61, Asn-85, Arg-109, and 136 to 139 each bind carbamoyl phosphate; these read STRT and HPTQ. L-ornithine is bound by residues Asn-168, Asp-239, and 243–244; that span reads SL. Carbamoyl phosphate is bound by residues 280–281 and Arg-332; that span reads CL.

This sequence belongs to the aspartate/ornithine carbamoyltransferase superfamily. OTCase family.

It localises to the cytoplasm. The catalysed reaction is carbamoyl phosphate + L-ornithine = L-citrulline + phosphate + H(+). It participates in amino-acid degradation; L-arginine degradation via ADI pathway; carbamoyl phosphate from L-arginine: step 2/2. Functionally, reversibly catalyzes the transfer of the carbamoyl group from carbamoyl phosphate (CP) to the N(epsilon) atom of ornithine (ORN) to produce L-citrulline. This chain is Ornithine carbamoyltransferase, catabolic, found in Mycoplasma pneumoniae (strain ATCC 29342 / M129 / Subtype 1) (Mycoplasmoides pneumoniae).